The following is a 368-amino-acid chain: Homoserine O-acetyltransferase (368 aa).

One can recognise an AB hydrolase-1 domain in the interval 41-352 (NVILITHALS…DYGHDSFLVE (312 aa)). Ser147 functions as the Nucleophile in the catalytic mechanism. Arg219 serves as a coordination point for substrate. Catalysis depends on residues Asp313 and His346. Asp347 serves as a coordination point for substrate.

The protein belongs to the AB hydrolase superfamily. MetX family. Homodimer.

It localises to the cytoplasm. The enzyme catalyses L-homoserine + acetyl-CoA = O-acetyl-L-homoserine + CoA. It functions in the pathway amino-acid biosynthesis; L-methionine biosynthesis via de novo pathway; O-acetyl-L-homoserine from L-homoserine: step 1/1. In terms of biological role, transfers an acetyl group from acetyl-CoA to L-homoserine, forming acetyl-L-homoserine. This is Homoserine O-acetyltransferase from Nautilia profundicola (strain ATCC BAA-1463 / DSM 18972 / AmH).